The primary structure comprises 281 residues: Putative outer membrane protein BBA52 (281 aa).

The tract at residues 162 to 281 (KRISDNQSKL…FFDSLEDQFI (120 aa)) is disordered. Positions 179 to 196 (NKSVGSKFSKNSRPSKSP) are enriched in polar residues. The span at 219-249 (EFLDDPSQESDELEREYQDDELESEDPDDGE) shows a compositional bias: acidic residues. Residues 250–262 (REYQDDRESRDDT) show a composition bias toward basic and acidic residues. Residues 263 to 281 (FNEDQSEDEFFDSLEDQFI) show a composition bias toward acidic residues.

The protein resides in the cell outer membrane. The sequence is that of Putative outer membrane protein BBA52 from Borreliella burgdorferi (strain ATCC 35210 / DSM 4680 / CIP 102532 / B31) (Borrelia burgdorferi).